We begin with the raw amino-acid sequence, 188 residues long: Protein GrpE (188 aa).

The protein belongs to the GrpE family. In terms of assembly, homodimer.

Its subcellular location is the cytoplasm. In terms of biological role, participates actively in the response to hyperosmotic and heat shock by preventing the aggregation of stress-denatured proteins, in association with DnaK and GrpE. It is the nucleotide exchange factor for DnaK and may function as a thermosensor. Unfolded proteins bind initially to DnaJ; upon interaction with the DnaJ-bound protein, DnaK hydrolyzes its bound ATP, resulting in the formation of a stable complex. GrpE releases ADP from DnaK; ATP binding to DnaK triggers the release of the substrate protein, thus completing the reaction cycle. Several rounds of ATP-dependent interactions between DnaJ, DnaK and GrpE are required for fully efficient folding. In Chromobacterium violaceum (strain ATCC 12472 / DSM 30191 / JCM 1249 / CCUG 213 / NBRC 12614 / NCIMB 9131 / NCTC 9757 / MK), this protein is Protein GrpE.